The sequence spans 68 residues: uncharacterized protein (68 aa).

Residues 1-27 are disordered; that stretch reads MNEFEKWIEGRYEPHEQKQKEHEDTMG.

This is an uncharacterized protein from Bacillus subtilis (strain 168).